We begin with the raw amino-acid sequence, 315 residues long: DNA-directed RNA polymerase subunit alpha (315 aa).

An alpha N-terminal domain (alpha-NTD) region spans residues 1–228; it reads MAQFQIECVE…DLFNPLKDIS (228 aa). Positions 238–315 are alpha C-terminal domain (alpha-CTD); that stretch reads IPDDPTAQIP…LPQERSSKHS (78 aa).

This sequence belongs to the RNA polymerase alpha chain family. As to quaternary structure, in cyanobacteria the RNAP catalytic core is composed of 2 alpha, 1 beta, 1 beta', 1 gamma and 1 omega subunit. When a sigma factor is associated with the core the holoenzyme is formed, which can initiate transcription.

It carries out the reaction RNA(n) + a ribonucleoside 5'-triphosphate = RNA(n+1) + diphosphate. In terms of biological role, DNA-dependent RNA polymerase catalyzes the transcription of DNA into RNA using the four ribonucleoside triphosphates as substrates. This chain is DNA-directed RNA polymerase subunit alpha, found in Trichormus variabilis (strain ATCC 29413 / PCC 7937) (Anabaena variabilis).